The following is a 341-amino-acid chain: MAVVEEQVVLRILDANLDRAREGVRVVEEWLRFGGGPGESLAECKALRQQLGRFHTERLRAARDTPHDPGTGLEHPDEGVRSSPLDVVRVNFARIQEALRVLEEYAKLVQPDLAAAAKEWRYRVYTLESTATGGDLRTRLAAARLYLVTSPHPELIEIVEHALAVGLPLVQLREKEAPARAVLDIALRLRDVTLRHGALFIVNDRVDLALACGADGVHLGQEDLPLARARALMGPRLLIGQSTHAPAEAQQAVADGADYLGVGPVYATPTKQGRTPVGLEYVRHCRESIERPGFAIGGIDRSNLEAVIAAGAERIAVVRAIMAAEDPGRTTAWFLERLNRG.

The interval 1-123 is unknown; it reads MAVVEEQVVL…AAAAKEWRYR (123 aa). The disordered stretch occupies residues 61 to 80; it reads AARDTPHDPGTGLEHPDEGV. Residues 124-341 form a thiamine-phosphate synthase region; sequence VYTLESTATG…AWFLERLNRG (218 aa). Residues 171–175 and N203 each bind 4-amino-2-methyl-5-(diphosphooxymethyl)pyrimidine; that span reads QLREK. Residues D204 and D223 each contribute to the Mg(2+) site. 4-amino-2-methyl-5-(diphosphooxymethyl)pyrimidine is bound at residue S242. Residue 268–270 participates in 2-[(2R,5Z)-2-carboxy-4-methylthiazol-5(2H)-ylidene]ethyl phosphate binding; the sequence is TPT. K271 contributes to the 4-amino-2-methyl-5-(diphosphooxymethyl)pyrimidine binding site. Residue G298 participates in 2-[(2R,5Z)-2-carboxy-4-methylthiazol-5(2H)-ylidene]ethyl phosphate binding.

It belongs to the thiamine-phosphate synthase family. Requires Mg(2+) as cofactor.

The catalysed reaction is 2-[(2R,5Z)-2-carboxy-4-methylthiazol-5(2H)-ylidene]ethyl phosphate + 4-amino-2-methyl-5-(diphosphooxymethyl)pyrimidine + 2 H(+) = thiamine phosphate + CO2 + diphosphate. It carries out the reaction 2-(2-carboxy-4-methylthiazol-5-yl)ethyl phosphate + 4-amino-2-methyl-5-(diphosphooxymethyl)pyrimidine + 2 H(+) = thiamine phosphate + CO2 + diphosphate. It catalyses the reaction 4-methyl-5-(2-phosphooxyethyl)-thiazole + 4-amino-2-methyl-5-(diphosphooxymethyl)pyrimidine + H(+) = thiamine phosphate + diphosphate. It participates in cofactor biosynthesis; thiamine diphosphate biosynthesis; thiamine phosphate from 4-amino-2-methyl-5-diphosphomethylpyrimidine and 4-methyl-5-(2-phosphoethyl)-thiazole: step 1/1. In terms of biological role, condenses 4-methyl-5-(beta-hydroxyethyl)thiazole monophosphate (THZ-P) and 2-methyl-4-amino-5-hydroxymethyl pyrimidine pyrophosphate (HMP-PP) to form thiamine monophosphate (TMP). This Gloeobacter violaceus (strain ATCC 29082 / PCC 7421) protein is Thiamine-phosphate synthase.